The chain runs to 257 residues: tRNA pseudouridine synthase A (257 aa).

Asp-53 serves as the catalytic Nucleophile. Tyr-111 is a substrate binding site.

Belongs to the tRNA pseudouridine synthase TruA family. Homodimer.

It catalyses the reaction uridine(38/39/40) in tRNA = pseudouridine(38/39/40) in tRNA. In terms of biological role, formation of pseudouridine at positions 38, 39 and 40 in the anticodon stem and loop of transfer RNAs. This is tRNA pseudouridine synthase A from Xanthomonas axonopodis pv. citri (strain 306).